The sequence spans 150 residues: Arginine repressor (150 aa).

Belongs to the ArgR family.

The protein resides in the cytoplasm. The protein operates within amino-acid biosynthesis; L-arginine biosynthesis [regulation]. In terms of biological role, regulates arginine biosynthesis genes. The chain is Arginine repressor from Carboxydothermus hydrogenoformans (strain ATCC BAA-161 / DSM 6008 / Z-2901).